The chain runs to 1209 residues: 3',5'-cyclic-AMP phosphodiesterase, isoform I (1209 aa).

Disordered stretches follow at residues 16 to 35, 59 to 82, 275 to 353, 372 to 403, 442 to 498, 626 to 655, and 754 to 792; these read NVAK…GSGT, GGGS…KRKS, LYSG…PLPP, SATS…SPRI, ETLA…MQAE, VPAS…LSQG, and SAGQ…RLPT. 2 stretches are compositionally biased toward gly residues: residues 25–35 and 59–77; these read SSNGTGNGSGT and GGGS…GSGS. Positions 275–290 are enriched in polar residues; that stretch reads LYSGSNPSTNPCQSAV. Positions 291–314 are enriched in low complexity; that stretch reads QNQGQNSNPNPNQNPNTNPNQNQQ. The span at 315 to 324 shows a compositional bias: polar residues; the sequence is RCSCQPQTSP. The segment covering 372–383 has biased composition (low complexity); the sequence is SATSSSAGTVPP. Over residues 385–400 the composition is skewed to polar residues; that stretch reads GQQTQEYIAGTSSTPS. Composition is skewed to low complexity over residues 445 to 462 and 472 to 483; these read ASSS…NSSS and TSSSASALATSH. Polar residues-rich tracts occupy residues 484 to 498 and 627 to 645; these read PSNS…MQAE and PASN…SRSG. The PDEase domain maps to 795–1124; the sequence is VETPRENELG…DYYQSMIPPS (330 aa). The active-site Proton donor is histidine 871. 871-875 is a binding site for 3',5'-cyclic AMP; that stretch reads HNSLH. Residues histidine 875, histidine 911, aspartate 912, and aspartate 1029 each coordinate a divalent metal cation. Residues aspartate 912, aspartate 1029, and glutamine 1080 each contribute to the 3',5'-cyclic AMP site. Residues 1146 to 1163 are compositionally biased toward acidic residues; sequence EESDQENLAELEEGDESG. Residues 1146–1209 are disordered; sequence EESDQENLAE…CQNQPQHGGM (64 aa). The segment covering 1164–1181 has biased composition (low complexity); it reads GESTTTGTTGTTAASALS. Residues 1182–1193 are compositionally biased toward gly residues; sequence GAGGGGGGGGGM. The segment covering 1199-1209 has biased composition (polar residues); the sequence is GCQNQPQHGGM.

The protein belongs to the cyclic nucleotide phosphodiesterase family. PDE4 subfamily. Monomer. The cofactor is a divalent metal cation.

The enzyme catalyses 3',5'-cyclic AMP + H2O = AMP + H(+). The protein operates within purine metabolism; 3',5'-cyclic AMP degradation; AMP from 3',5'-cyclic AMP: step 1/1. Functionally, hydrolyzes the second messenger cAMP, which is a key regulator of many important physiological processes. Vital for female fertility. Required for learning/memory. In Drosophila melanogaster (Fruit fly), this protein is 3',5'-cyclic-AMP phosphodiesterase, isoform I.